A 117-amino-acid chain; its full sequence is MNAPPAFESFLLFEGEKKITINKDTKVPNACLFTINKEDHTLGNIIKSQLLKDPQVLFAGYKVPHPLEHKIIIRVQTTPDYSPQEAFTNAITDLISELSLLEERFRVAIKDKQEGIE.

M1 carries the post-translational modification N-acetylmethionine.

The protein belongs to the archaeal Rpo11/eukaryotic RPB11/RPC19 RNA polymerase subunit family. In terms of assembly, component of the RNA polymerase II (Pol II) core complex consisting of 12 subunits: a ten-subunit catalytic core composed of POLR2A/RPB1, POLR2B/RPB2, POLR2C/RPB3, POLR2I/RPB9, POLR2J/RPB11, POLR2E/RPABC1, POLR2F/RPABC2, POLR2H/RPABC3, POLR2K/RPABC4 and POLR2L/RPABC5 and a mobile stalk composed of two subunits POLR2D/RPB4 and POLR2G/RPB7, protruding from the core and functioning primarily in transcription initiation. Part of Pol II(G) complex, in which Pol II core associates with an additional subunit POLR2M; unlike conventional Pol II, Pol II(G) functions as a transcriptional repressor. Part of TBP-based Pol II pre-initiation complex (PIC), in which Pol II core assembles with general transcription factors and other specific initiation factors including GTF2E1, GTF2E2, GTF2F1, GTF2F2, TCEA1, ERCC2, ERCC3, GTF2H2, GTF2H3, GTF2H4, GTF2H5, GTF2A1, GTF2A2, GTF2B and TBP; this large multi-subunit PIC complex mediates DNA unwinding and targets Pol II core to the transcription start site where the first phosphodiester bond forms. Interacts with PTPN6; this interaction promotes the recruitment of RNA pol II to the PCK1 promoter.

It localises to the nucleus. Its function is as follows. DNA-dependent RNA polymerase catalyzes the transcription of DNA into RNA using the four ribonucleoside triphosphates as substrates. Component of RNA polymerase II which synthesizes mRNA precursors and many functional non-coding RNAs. Pol II is the central component of the basal RNA polymerase II transcription machinery. It is composed of mobile elements that move relative to each other. POLR2J/RPB11 is part of the core element with the central large cleft. In Bos taurus (Bovine), this protein is DNA-directed RNA polymerase II subunit RPB11 (POLR2J).